The following is a 364-amino-acid chain: UDP-N-acetylglucosamine--N-acetylmuramyl-(pentapeptide) pyrophosphoryl-undecaprenol N-acetylglucosamine transferase (364 aa).

Residues 10–12, N124, S195, I250, and Q295 contribute to the UDP-N-acetyl-alpha-D-glucosamine site; that span reads TGG.

Belongs to the glycosyltransferase 28 family. MurG subfamily.

Its subcellular location is the cell membrane. The catalysed reaction is di-trans,octa-cis-undecaprenyl diphospho-N-acetyl-alpha-D-muramoyl-L-alanyl-D-glutamyl-meso-2,6-diaminopimeloyl-D-alanyl-D-alanine + UDP-N-acetyl-alpha-D-glucosamine = di-trans,octa-cis-undecaprenyl diphospho-[N-acetyl-alpha-D-glucosaminyl-(1-&gt;4)]-N-acetyl-alpha-D-muramoyl-L-alanyl-D-glutamyl-meso-2,6-diaminopimeloyl-D-alanyl-D-alanine + UDP + H(+). Its pathway is cell wall biogenesis; peptidoglycan biosynthesis. Cell wall formation. Catalyzes the transfer of a GlcNAc subunit on undecaprenyl-pyrophosphoryl-MurNAc-pentapeptide (lipid intermediate I) to form undecaprenyl-pyrophosphoryl-MurNAc-(pentapeptide)GlcNAc (lipid intermediate II). The polypeptide is UDP-N-acetylglucosamine--N-acetylmuramyl-(pentapeptide) pyrophosphoryl-undecaprenol N-acetylglucosamine transferase (Bacillus cytotoxicus (strain DSM 22905 / CIP 110041 / 391-98 / NVH 391-98)).